The primary structure comprises 99 residues: Large ribosomal subunit protein eL30 (99 aa).

This sequence belongs to the eukaryotic ribosomal protein eL30 family.

The chain is Large ribosomal subunit protein eL30 from Methanosarcina acetivorans (strain ATCC 35395 / DSM 2834 / JCM 12185 / C2A).